Here is a 357-residue protein sequence, read N- to C-terminus: DNA integrity scanning protein DisA (357 aa).

Residues 9–147 (DRKLLEILKT…DDIKYILRDS (139 aa)) enclose the DAC domain. ATP contacts are provided by residues G76, L94, and 107-111 (TRHRT).

This sequence belongs to the DisA family. As to quaternary structure, homooctamer. Requires Mg(2+) as cofactor.

It carries out the reaction 2 ATP = 3',3'-c-di-AMP + 2 diphosphate. Functionally, participates in a DNA-damage check-point that is active prior to asymmetric division when DNA is damaged. DisA forms globular foci that rapidly scan along the chromosomes during sporulation, searching for lesions. When a lesion is present, DisA pauses at the lesion site. This triggers a cellular response that culminates in a temporary block in sporulation initiation. Its function is as follows. Also has diadenylate cyclase activity, catalyzing the condensation of 2 ATP molecules into cyclic di-AMP (c-di-AMP). c-di-AMP acts as a signaling molecule that couples DNA integrity with progression of sporulation. The rise in c-di-AMP level generated by DisA while scanning the chromosome, operates as a positive signal that advances sporulation; upon encountering a lesion, the DisA focus arrests at the damaged site and halts c-di-AMP synthesis. In Clostridium acetobutylicum (strain ATCC 824 / DSM 792 / JCM 1419 / IAM 19013 / LMG 5710 / NBRC 13948 / NRRL B-527 / VKM B-1787 / 2291 / W), this protein is DNA integrity scanning protein DisA.